Here is a 579-residue protein sequence, read N- to C-terminus: Type II methyltransferase M.BseCI (579 aa).

It belongs to the N(4)/N(6)-methyltransferase family.

The catalysed reaction is a 2'-deoxyadenosine in DNA + S-adenosyl-L-methionine = an N(6)-methyl-2'-deoxyadenosine in DNA + S-adenosyl-L-homocysteine + H(+). In terms of biological role, a gamma subtype methylase, recognizes the double-stranded sequence 5'-ATCGAT-3', methylation on A-5 on both strands, and protects the DNA from cleavage by the BanIII endonuclease. The sequence is that of Type II methyltransferase M.BseCI from Geobacillus stearothermophilus (Bacillus stearothermophilus).